The following is a 409-amino-acid chain: PPE family protein PPE32 (409 aa).

Belongs to the mycobacterial PPE family. Interacts with host Toll-like receptor 2 (TLR2).

It is found in the secreted. The protein resides in the cell wall. The protein localises to the cell surface. Virulence factor that modulates the production of host cytokines. The protein is PPE family protein PPE32 of Mycobacterium tuberculosis (strain CDC 1551 / Oshkosh).